Here is a 322-residue protein sequence, read N- to C-terminus: Protein-methionine-sulfoxide reductase catalytic subunit MsrP (322 aa).

The segment at residues 1–59 is a signal peptide (tat-type signal); it reads MSLRDALKTPSSEITDEAVYRDRRRLLQLFALTPALSVAGCAEADPPPPPKTVVTPAQA. Mo-molybdopterin contacts are provided by residues N79, 82-83, C137, T172, N220, R225, and 236-238; these read YE and SIK.

Belongs to the MsrP family. In terms of assembly, heterodimer of a catalytic subunit (MsrP) and a heme-binding subunit (MsrQ). The cofactor is Mo-molybdopterin. In terms of processing, predicted to be exported by the Tat system. The position of the signal peptide cleavage has not been experimentally proven.

It is found in the periplasm. The catalysed reaction is L-methionyl-[protein] + a quinone + H2O = L-methionyl-(S)-S-oxide-[protein] + a quinol. It carries out the reaction L-methionyl-[protein] + a quinone + H2O = L-methionyl-(R)-S-oxide-[protein] + a quinol. Part of the MsrPQ system that repairs oxidized periplasmic proteins containing methionine sulfoxide residues (Met-O), using respiratory chain electrons. Thus protects these proteins from oxidative-stress damage caused by reactive species of oxygen and chlorine generated by the host defense mechanisms. MsrPQ is essential for the maintenance of envelope integrity under bleach stress, rescuing a wide series of structurally unrelated periplasmic proteins from methionine oxidation. The catalytic subunit MsrP is non-stereospecific, being able to reduce both (R-) and (S-) diastereoisomers of methionine sulfoxide. The sequence is that of Protein-methionine-sulfoxide reductase catalytic subunit MsrP from Xanthomonas campestris pv. campestris (strain ATCC 33913 / DSM 3586 / NCPPB 528 / LMG 568 / P 25).